Here is a 54-residue protein sequence, read N- to C-terminus: Potassium channel toxin alpha-KTx 14.2 (54 aa).

Positions 1-23 are cleaved as a signal peptide; the sequence is MKIFFAILLILAVCSMAIWTVNG. Disulfide bonds link C30–C46, C36–C51, and C40–C53.

Belongs to the short scorpion toxin superfamily. Potassium channel inhibitor family. Alpha-KTx 14 subfamily. In terms of tissue distribution, expressed by the venom gland.

Its subcellular location is the secreted. Its function is as follows. Inhibits potassium channels. May be active towards small conductance calcium-activated potassium channels (KCNN, SK), and less active towards voltage-gated potassium channels (Kv/KCN). The sequence is that of Potassium channel toxin alpha-KTx 14.2 from Olivierus martensii (Manchurian scorpion).